An 807-amino-acid polypeptide reads, in one-letter code: Spondin-1 (807 aa).

Positions 1 to 28 (MRLSPAPLKLSRTPALLALALPLAAALA) are cleaved as a signal peptide. One can recognise a Reelin domain in the interval 29-194 (FSDETLDKVP…DSTFDGVTDK (166 aa)). Intrachain disulfides connect Cys44–Cys128, Cys156–Cys182, Cys199–Cys336, Cys200–Cys340, Cys202–Cys415, Cys443–Cys480, Cys454–Cys489, Cys459–Cys494, Cys502–Cys538, Cys513–Cys517, Cys548–Cys554, Cys559–Cys595, Cys570–Cys574, Cys605–Cys610, Cys615–Cys650, Cys626–Cys630, and Cys660–Cys665. Residues 195–388 (PILDCCACGT…LTSLDHPQSP (194 aa)) form the Spondin domain. Asn214 carries an N-linked (GlcNAc...) asparagine glycan. Residues Asp325, Asp354, and Asp358 each contribute to the Ca(2+) site. TSP type-1 domains are found at residues 442 to 495 (TCIY…PGCS), 501 to 555 (TCTM…EECS), 558 to 611 (SCLM…PECH), 614 to 666 (PCLL…PECP), 668 to 721 (DCEL…RKCL), and 754 to 806 (GCRM…NVHP). Trp448 is a glycosylation site (C-linked (Man) tryptophan). A C-linked (Man) tryptophan; partial glycan is attached at Trp451. Residue Trp507 is glycosylated (C-linked (Man) tryptophan). A glycan (C-linked (Man) tryptophan; partial) is linked at Trp510. C-linked (Man) tryptophan glycosylation is present at Trp564. Residue Trp620 is glycosylated (C-linked (Man) tryptophan; partial). The C-linked (Man) tryptophan glycan is linked to Trp623. Residue Trp674 is glycosylated (C-linked (Man) tryptophan). Asn681 carries N-linked (GlcNAc...) asparagine glycosylation.

As to quaternary structure, binds to the central extracellular domain of APP and inhibits beta-secretase cleavage of APP. Highest expression in lung, lower expression in brain, heart, kidney, liver and testis, and lowest expression in pancreas, skeletal muscle and ovary. Not expressed in spleen.

It localises to the secreted. Its subcellular location is the extracellular space. The protein resides in the extracellular matrix. Cell adhesion protein that promotes the attachment of spinal cord and sensory neuron cells and the outgrowth of neurites in vitro. May contribute to the growth and guidance of axons in both the spinal cord and the PNS. Major factor for vascular smooth muscle cell. This Homo sapiens (Human) protein is Spondin-1 (SPON1).